The sequence spans 1146 residues: Cell division cycle and apoptosis regulator protein 1 (1146 aa).

The tract at residues 1–246 is interaction with AR; it reads MAQFGGQKNP…AQPQPQSLLQ (246 aa). Residues 200–657 are interaction with GATA2; the sequence is QRIQTLPNQN…RALSSKGLKS (458 aa). Residues 282–351 form a disordered region; sequence IVSQPQPARR…RRERERSPRR (70 aa). 2 stretches are compositionally biased toward basic and acidic residues: residues 290–331 and 338–349; these read RRLD…ERSP and ERSPRRERERSP. Serine 453 is modified (phosphoserine). Positions 591–615 form a coiled coil; sequence KQQLVEKLQGERKKADGEQDEEEKD. The interval 599–635 is disordered; that stretch reads QGERKKADGEQDEEEKDDGEVKEIATPTHWSKLDPKA. Positions 608-618 are enriched in acidic residues; sequence EQDEEEKDDGE. At threonine 624 the chain carries Phosphothreonine. In terms of domain architecture, SAP spans 633–667; sequence PKAMKVNDLRKELESRALSSKGLKSQLIARLTKQL. A Glycyl lysine isopeptide (Lys-Gly) (interchain with G-Cter in ubiquitin) cross-link involves residue lysine 634. The interaction with GATA1 stretch occupies residues 640-1146; it reads DLRKELESRA…EKSKENGSGV (507 aa). Phosphothreonine is present on threonine 664. 4 stretches are compositionally biased toward basic and acidic residues: residues 671-684, 691-716, 793-814, and 829-852; these read EQKEEQKELEKSEK, DKKSEDDKEEEERKRQEEVERQRQER, KEDKKDKEKKSKKEERKDKKEE, and SGDDKDKKEDRDERKKEEKRKDDS. 2 disordered regions span residues 671 to 716 and 793 to 912; these read EQKE…RQER and KEDK…KEKP. Serine 682 and serine 694 each carry phosphoserine. The segment covering 853 to 884 has biased composition (acidic residues); the sequence is KDDDETEEDNNQDEYDPMEAEEAEDEDDDREE. A Phosphothreonine modification is found at threonine 858. The segment covering 885–912 has biased composition (basic and acidic residues); the sequence is EEVKRDDKRDVSRYCKDRPAKDKEKEKP. Lysine 1008 is covalently cross-linked (Glycyl lysine isopeptide (Lys-Gly) (interchain with G-Cter in SUMO1); alternate). Lysine 1008 participates in a covalent cross-link: Glycyl lysine isopeptide (Lys-Gly) (interchain with G-Cter in SUMO2); alternate. Residues 1029-1110 are a coiled coil; the sequence is DVGSLLQKLE…LQFENQLNKT (82 aa). Glycyl lysine isopeptide (Lys-Gly) (interchain with G-Cter in SUMO2) cross-links involve residues lysine 1063 and lysine 1131.

In terms of assembly, directly interacts with ESR1, NR3C1 and p53/TP53. Interacts (via N-terminus) with CALCOCO1. Interacts with MED1 and GATA1. Interacts with AR and GATA2.

It is found in the cytoplasm. Its subcellular location is the perinuclear region. Functionally, associates with components of the Mediator and p160 coactivator complexes that play a role as intermediaries transducing regulatory signals from upstream transcriptional activator proteins to basal transcription machinery at the core promoter. Recruited to endogenous nuclear receptor target genes in response to the appropriate hormone. Also functions as a p53 coactivator. May thus play an important role in transcriptional regulation. May be involved in apoptosis signaling in the presence of the retinoid CD437. Apoptosis induction involves sequestration of 14-3-3 protein(s) and mediated altered expression of multiple cell cycle regulatory genes including MYC, CCNB1 and CDKN1A. Plays a role in cell cycle progression and/or cell proliferation. In association with CALCOCO1 enhances GATA1- and MED1-mediated transcriptional activation from the gamma-globin promoter during erythroid differentiation of K562 erythroleukemia cells. Can act as a both a coactivator and corepressor of AR-mediated transcription. Contributes to chromatin looping and AR transcription complex assembly by stabilizing AR-GATA2 association on chromatin and facilitating MED1 and RNA polymerase II recruitment to AR-binding sites. May play an important role in the growth and tumorigenesis of prostate cancer cells. The sequence is that of Cell division cycle and apoptosis regulator protein 1 (Ccar1) from Mus musculus (Mouse).